A 188-amino-acid polypeptide reads, in one-letter code: Adenine phosphoribosyltransferase (188 aa).

This sequence belongs to the purine/pyrimidine phosphoribosyltransferase family. In terms of assembly, homodimer.

It localises to the cytoplasm. It catalyses the reaction AMP + diphosphate = 5-phospho-alpha-D-ribose 1-diphosphate + adenine. It participates in purine metabolism; AMP biosynthesis via salvage pathway; AMP from adenine: step 1/1. In terms of biological role, catalyzes a salvage reaction resulting in the formation of AMP, that is energically less costly than de novo synthesis. The polypeptide is Adenine phosphoribosyltransferase (Burkholderia vietnamiensis (strain G4 / LMG 22486) (Burkholderia cepacia (strain R1808))).